The chain runs to 216 residues: MKKPYRKISDYAIVGGLSALVMVSIVGCKSNADDKPKEQSSLSQSVQKGAFVILEEQKDKSYKVVEEYPSSRTHIIVRDLQGNERVLSNEEIQKLIKEEEAKIDNGTSKLVQPNNGGGSNEGSGFGLGSAILGSAAGAILGSYIGNKLFNNPNYQQNAQRTYKSPQAYQRSQNSFSKSAPSASSMGGASKGQSGFFGSSRPTSSPAVSSGTRGFNS.

The signal sequence occupies residues 1-27; that stretch reads MKKPYRKISDYAIVGGLSALVMVSIVG. A lipid anchor (N-palmitoyl cysteine) is attached at Cys-28. Cys-28 carries S-diacylglycerol cysteine lipidation. Over residues 159–170 the composition is skewed to polar residues; the sequence is QRTYKSPQAYQR. The interval 159–216 is disordered; sequence QRTYKSPQAYQRSQNSFSKSAPSASSMGGASKGQSGFFGSSRPTSSPAVSSGTRGFNS. Residues 171 to 209 show a composition bias toward low complexity; the sequence is SQNSFSKSAPSASSMGGASKGQSGFFGSSRPTSSPAVSS.

Belongs to the UPF0323 family.

The protein resides in the cell membrane. This chain is UPF0323 lipoprotein HPG27_212, found in Helicobacter pylori (strain G27).